Reading from the N-terminus, the 305-residue chain is Oxygen-dependent coproporphyrinogen-III oxidase (305 aa).

Ser-94 contributes to the substrate binding site. His-98 and His-108 together coordinate a divalent metal cation. The Proton donor role is filled by His-108. Residue 110 to 112 participates in substrate binding; sequence NVR. Residues His-147 and His-177 each contribute to the a divalent metal cation site. The interval 242-277 is important for dimerization; it reads YVEFNLVYDRGTLFGLQTGGRTESILMSMPPLVRWE. 260 to 262 serves as a coordination point for substrate; sequence GGR.

Belongs to the aerobic coproporphyrinogen-III oxidase family. In terms of assembly, homodimer. The cofactor is a divalent metal cation.

The protein localises to the cytoplasm. It carries out the reaction coproporphyrinogen III + O2 + 2 H(+) = protoporphyrinogen IX + 2 CO2 + 2 H2O. Its pathway is porphyrin-containing compound metabolism; protoporphyrin-IX biosynthesis; protoporphyrinogen-IX from coproporphyrinogen-III (O2 route): step 1/1. In terms of biological role, involved in the heme biosynthesis. Catalyzes the aerobic oxidative decarboxylation of propionate groups of rings A and B of coproporphyrinogen-III to yield the vinyl groups in protoporphyrinogen-IX. This Shewanella denitrificans (strain OS217 / ATCC BAA-1090 / DSM 15013) protein is Oxygen-dependent coproporphyrinogen-III oxidase.